We begin with the raw amino-acid sequence, 54 residues long: uncharacterized protein (54 aa).

Residues 1-21 (MNSKQILSLSAFAMTIATAAA) form the signal peptide. The Extracellular segment spans residues 22-29 (GNWNAGDT). Residues 30 to 50 (IALLIGIAMFFVLLLALLGWI) traverse the membrane as a helical segment. Over 51–54 (SRKK) the chain is Cytoplasmic.

Its subcellular location is the membrane. This is an uncharacterized protein from Dictyostelium discoideum (Social amoeba).